Reading from the N-terminus, the 380-residue chain is Chaperone protein DnaJ (380 aa).

The region spanning 6-71 (DYYESLEVSR…QKRAAYDRYG (66 aa)) is the J domain. Residues 136 to 215 (GVTKDVEVRT…CHGTGTEAKT (80 aa)) form a CR-type zinc finger. Zn(2+) is bound by residues Cys-149, Cys-152, Cys-167, Cys-170, Cys-189, Cys-192, Cys-203, and Cys-206. CXXCXGXG motif repeat units lie at residues 149 to 156 (CEACHGSG), 167 to 174 (CPTCHGAG), 189 to 196 (CPTCHGSG), and 203 to 210 (CKVCHGTG).

It belongs to the DnaJ family. Homodimer. Zn(2+) is required as a cofactor.

It is found in the cytoplasm. Participates actively in the response to hyperosmotic and heat shock by preventing the aggregation of stress-denatured proteins and by disaggregating proteins, also in an autonomous, DnaK-independent fashion. Unfolded proteins bind initially to DnaJ; upon interaction with the DnaJ-bound protein, DnaK hydrolyzes its bound ATP, resulting in the formation of a stable complex. GrpE releases ADP from DnaK; ATP binding to DnaK triggers the release of the substrate protein, thus completing the reaction cycle. Several rounds of ATP-dependent interactions between DnaJ, DnaK and GrpE are required for fully efficient folding. Also involved, together with DnaK and GrpE, in the DNA replication of plasmids through activation of initiation proteins. This chain is Chaperone protein DnaJ, found in Gluconobacter oxydans (strain 621H) (Gluconobacter suboxydans).